A 131-amino-acid polypeptide reads, in one-letter code: Large ribosomal subunit protein bL12c (131 aa).

A compositionally biased stretch (basic and acidic residues) spans K106–G125. The segment at K106–K131 is disordered.

It belongs to the bacterial ribosomal protein bL12 family. As to quaternary structure, homodimer. Part of the ribosomal stalk of the 50S ribosomal subunit. Forms a multimeric L10(L12)X complex, where L10 forms an elongated spine to which 2 to 4 L12 dimers bind in a sequential fashion. Binds GTP-bound translation factors.

It localises to the plastid. The protein localises to the chloroplast. In terms of biological role, forms part of the ribosomal stalk which helps the ribosome interact with GTP-bound translation factors. Is thus essential for accurate translation. This is Large ribosomal subunit protein bL12c from Gracilaria tenuistipitata var. liui (Red alga).